The sequence spans 183 residues: Inosine triphosphate pyrophosphatase (183 aa).

An ITP-binding site is contributed by 8–13; it reads TGNKNK. Glutamate 36 contributes to the Mg(2+) binding site. ITP is bound by residues lysine 48, 64–65, lysine 81, 140–143, lysine 161, and 166–167; these read DT, FGWD, and HR.

It belongs to the HAM1 NTPase family. In terms of assembly, homodimer. Mg(2+) serves as cofactor. Mn(2+) is required as a cofactor.

Its subcellular location is the cytoplasm. It is found in the nucleus. The catalysed reaction is ITP + H2O = IMP + diphosphate + H(+). It carries out the reaction dITP + H2O = dIMP + diphosphate + H(+). The enzyme catalyses XTP + H2O = XMP + diphosphate + H(+). Functionally, pyrophosphatase that hydrolyzes non-canonical purine nucleotides such as inosine triphosphate (ITP), deoxyinosine triphosphate (dITP) or xanthosine 5'-triphosphate (XTP) to their respective monophosphate derivatives. The enzyme does not distinguish between the deoxy- and ribose forms. Probably excludes non-canonical purines from RNA and DNA precursor pools, thus preventing their incorporation into RNA and DNA and avoiding chromosomal lesions. The sequence is that of Inosine triphosphate pyrophosphatase from Emericella nidulans (strain FGSC A4 / ATCC 38163 / CBS 112.46 / NRRL 194 / M139) (Aspergillus nidulans).